The chain runs to 247 residues: 1-(5-phosphoribosyl)-5-[(5-phosphoribosylamino)methylideneamino] imidazole-4-carboxamide isomerase (247 aa).

Asp-8 serves as the catalytic Proton acceptor. The active-site Proton donor is Asp-131.

It belongs to the HisA/HisF family.

It is found in the cytoplasm. The catalysed reaction is 1-(5-phospho-beta-D-ribosyl)-5-[(5-phospho-beta-D-ribosylamino)methylideneamino]imidazole-4-carboxamide = 5-[(5-phospho-1-deoxy-D-ribulos-1-ylimino)methylamino]-1-(5-phospho-beta-D-ribosyl)imidazole-4-carboxamide. It functions in the pathway amino-acid biosynthesis; L-histidine biosynthesis; L-histidine from 5-phospho-alpha-D-ribose 1-diphosphate: step 4/9. The polypeptide is 1-(5-phosphoribosyl)-5-[(5-phosphoribosylamino)methylideneamino] imidazole-4-carboxamide isomerase (Ralstonia pickettii (strain 12J)).